The chain runs to 502 residues: Maturase K (502 aa).

This sequence belongs to the intron maturase 2 family. MatK subfamily.

The protein resides in the plastid. Its subcellular location is the chloroplast. Its function is as follows. Usually encoded in the trnK tRNA gene intron. Probably assists in splicing its own and other chloroplast group II introns. The polypeptide is Maturase K (Stanleya pinnata (Prince's plume)).